A 270-amino-acid polypeptide reads, in one-letter code: MGGQVRVAIVGAGGRMGRTLIESAYHQEHIRLGAAIERPGSSLVGVDAGELAGVGKLNVLVMDSLDYATDDFDVLIDFTAPEASIVHLDWCVRHKKAMVIGTTGFNHAQKEQINAFAEQTPVVMAPNMSVGVNLMWKLLELAAEVMGDYTDIEIIEGHHRHKKDAPSGTALKMGEVIAKTLGRDLEKCAVYGREGITGERDRETIGFATVRAGDLVGEHTAMFADIGERLEITHKASSRMTFANGAMRAAHWLVEQKPGLYDMQQVLGLN.

NAD(+) contacts are provided by residues 11-16 and Glu-37; that span reads GAGGRM. Arg-38 provides a ligand contact to NADP(+). NAD(+)-binding positions include 101 to 103 and 125 to 128; these read GTT and APNM. His-158 functions as the Proton donor/acceptor in the catalytic mechanism. (S)-2,3,4,5-tetrahydrodipicolinate is bound at residue His-159. Catalysis depends on Lys-162, which acts as the Proton donor. 168–169 lines the (S)-2,3,4,5-tetrahydrodipicolinate pocket; that stretch reads GT.

It belongs to the DapB family.

The protein localises to the cytoplasm. The catalysed reaction is (S)-2,3,4,5-tetrahydrodipicolinate + NAD(+) + H2O = (2S,4S)-4-hydroxy-2,3,4,5-tetrahydrodipicolinate + NADH + H(+). It catalyses the reaction (S)-2,3,4,5-tetrahydrodipicolinate + NADP(+) + H2O = (2S,4S)-4-hydroxy-2,3,4,5-tetrahydrodipicolinate + NADPH + H(+). It participates in amino-acid biosynthesis; L-lysine biosynthesis via DAP pathway; (S)-tetrahydrodipicolinate from L-aspartate: step 4/4. In terms of biological role, catalyzes the conversion of 4-hydroxy-tetrahydrodipicolinate (HTPA) to tetrahydrodipicolinate. The polypeptide is 4-hydroxy-tetrahydrodipicolinate reductase (Shewanella sp. (strain MR-4)).